The chain runs to 122 residues: Large ribosomal subunit protein uL14 (122 aa).

This sequence belongs to the universal ribosomal protein uL14 family. In terms of assembly, part of the 50S ribosomal subunit. Forms a cluster with proteins L3 and L19. In the 70S ribosome, L14 and L19 interact and together make contacts with the 16S rRNA in bridges B5 and B8.

Its function is as follows. Binds to 23S rRNA. Forms part of two intersubunit bridges in the 70S ribosome. This chain is Large ribosomal subunit protein uL14, found in Syntrophobacter fumaroxidans (strain DSM 10017 / MPOB).